The chain runs to 130 residues: Small ribosomal subunit protein uS9 (130 aa).

The protein belongs to the universal ribosomal protein uS9 family.

The chain is Small ribosomal subunit protein uS9 from Cupriavidus metallidurans (strain ATCC 43123 / DSM 2839 / NBRC 102507 / CH34) (Ralstonia metallidurans).